The chain runs to 230 residues: Large ribosomal subunit protein uL1 (230 aa).

It belongs to the universal ribosomal protein uL1 family. As to quaternary structure, part of the 50S ribosomal subunit.

Its function is as follows. Binds directly to 23S rRNA. The L1 stalk is quite mobile in the ribosome, and is involved in E site tRNA release. Protein L1 is also a translational repressor protein, it controls the translation of the L11 operon by binding to its mRNA. In Leptospira biflexa serovar Patoc (strain Patoc 1 / Ames), this protein is Large ribosomal subunit protein uL1.